The primary structure comprises 526 residues: MNPIDSPAWRALAAHAEAIRPLHLRDLFATDPQRFELFSLHHDGLLLDYSKQRVSVETMALLRAYAETADVTGWRRRMLDGESINHTEGRAVRHMSLRAGDQAPAEVRAALARQQAFCESIHNGVWRGFSGERITDVVNIGIGGSDLGPRMAALALSARQQPDIAVHFIANVDSADIAPLLASLNPRTTLFIVASKTFTTLETLTNARTARDWLLATAGQESAIARHFVAISTNLELTKQFGIADDNVFEFWDWVGGRFSIWSAIGLSLALAIGWKNFEQLQAGARAMDRHFIDTPADENLPLTLALLSLWNTNFLGASTEAMLPYSQSLHLFPAYLQQLEMESNGKQIDRDGKPLNIATSPVIWGESGTNGQHSFYQLFHQGGHLIPADFVALREADFPLPGHHASLLANCLAQSAALAFGQTAEEVRAAGIPEALIPYKVFPGNQPSNTLLLPSLDPYTLGQLLALFEHKVFCLGVLWNLNAFDQWGVELGKQLAGQLTPLIEGNGDLSAFDSSTRGLITALKG.

Residue Glu-343 is the Proton donor of the active site. Residues His-374 and Lys-494 contribute to the active site.

It belongs to the GPI family.

Its subcellular location is the cytoplasm. The enzyme catalyses alpha-D-glucose 6-phosphate = beta-D-fructose 6-phosphate. It functions in the pathway carbohydrate biosynthesis; gluconeogenesis. The protein operates within carbohydrate degradation; glycolysis; D-glyceraldehyde 3-phosphate and glycerone phosphate from D-glucose: step 2/4. Functionally, catalyzes the reversible isomerization of glucose-6-phosphate to fructose-6-phosphate. This is Glucose-6-phosphate isomerase from Dechloromonas aromatica (strain RCB).